The sequence spans 345 residues: Tropomodulin-4 (345 aa).

Positions 42–63 are disordered; sequence NMLLPAGLRQRDQTKKSPTGPL.

It belongs to the tropomodulin family. As to quaternary structure, binds to the N-terminus of tropomyosin and to actin. In terms of tissue distribution, highly expressed in skeletal muscle.

It is found in the cytoplasm. Its subcellular location is the cytoskeleton. Its function is as follows. Blocks the elongation and depolymerization of the actin filaments at the pointed end. The Tmod/TM complex contributes to the formation of the short actin protofilament, which in turn defines the geometry of the membrane skeleton. This chain is Tropomodulin-4 (TMOD4), found in Homo sapiens (Human).